The sequence spans 230 residues: Phosphoglycerate mutase-like protein 4 (230 aa).

The active-site Tele-phosphohistidine intermediate is H21. The Proton donor/acceptor role is filled by E96.

It belongs to the phosphoglycerate mutase family.

In terms of biological role, may play a role in carbohydrates metabolism. The polypeptide is Phosphoglycerate mutase-like protein 4 (Arabidopsis thaliana (Mouse-ear cress)).